The chain runs to 522 residues: 2-isopropylmalate synthase (522 aa).

The Pyruvate carboxyltransferase domain occupies 5 to 267; sequence VIIFDTTLRD…ETGINAKEIH (263 aa). Residues Asp14, His202, His204, and Asn238 each contribute to the Mn(2+) site. A regulatory domain region spans residues 392-522; it reads QLQQLVVQSD…MQKNRELGGV (131 aa).

This sequence belongs to the alpha-IPM synthase/homocitrate synthase family. LeuA type 1 subfamily. In terms of assembly, homodimer. It depends on Mn(2+) as a cofactor.

It is found in the cytoplasm. The enzyme catalyses 3-methyl-2-oxobutanoate + acetyl-CoA + H2O = (2S)-2-isopropylmalate + CoA + H(+). It participates in amino-acid biosynthesis; L-leucine biosynthesis; L-leucine from 3-methyl-2-oxobutanoate: step 1/4. In terms of biological role, catalyzes the condensation of the acetyl group of acetyl-CoA with 3-methyl-2-oxobutanoate (2-ketoisovalerate) to form 3-carboxy-3-hydroxy-4-methylpentanoate (2-isopropylmalate). The polypeptide is 2-isopropylmalate synthase (Shewanella putrefaciens (strain CN-32 / ATCC BAA-453)).